We begin with the raw amino-acid sequence, 284 residues long: Pantothenate synthetase (284 aa).

30–37 (MGNLHEGH) contributes to the ATP binding site. Catalysis depends on His37, which acts as the Proton donor. A (R)-pantoate-binding site is contributed by Gln61. Gln61 is a binding site for beta-alanine. 149–152 (GEKD) is an ATP binding site. Gln155 is a (R)-pantoate binding site. Residues Val178 and 186 to 189 (LSSR) contribute to the ATP site.

The protein belongs to the pantothenate synthetase family. Homodimer.

The protein resides in the cytoplasm. The catalysed reaction is (R)-pantoate + beta-alanine + ATP = (R)-pantothenate + AMP + diphosphate + H(+). It functions in the pathway cofactor biosynthesis; (R)-pantothenate biosynthesis; (R)-pantothenate from (R)-pantoate and beta-alanine: step 1/1. Functionally, catalyzes the condensation of pantoate with beta-alanine in an ATP-dependent reaction via a pantoyl-adenylate intermediate. The sequence is that of Pantothenate synthetase from Yersinia enterocolitica serotype O:8 / biotype 1B (strain NCTC 13174 / 8081).